The following is a 171-amino-acid chain: UPF0303 protein YPN_2129 (171 aa).

This sequence belongs to the UPF0303 family.

In Yersinia pestis bv. Antiqua (strain Nepal516), this protein is UPF0303 protein YPN_2129.